Consider the following 382-residue polypeptide: Chaperone protein DnaJ (382 aa).

The J domain maps to 5 to 70 (DYYEVLGLKK…QKRAAYDQYG (66 aa)). The segment at 134–212 (GTTKDIQINT…CHGEGRVHKK (79 aa)) adopts a CR-type zinc-finger fold. Zn(2+)-binding residues include Cys147, Cys150, Cys164, Cys167, Cys186, Cys189, Cys200, and Cys203. CXXCXGXG motif repeat units lie at residues 147–154 (CDSCGGSG), 164–171 (CPHCHGSG), 186–193 (CPSCHGSG), and 200–207 (CRSCHGEG).

It belongs to the DnaJ family. As to quaternary structure, homodimer. Zn(2+) serves as cofactor.

The protein localises to the cytoplasm. Its function is as follows. Participates actively in the response to hyperosmotic and heat shock by preventing the aggregation of stress-denatured proteins and by disaggregating proteins, also in an autonomous, DnaK-independent fashion. Unfolded proteins bind initially to DnaJ; upon interaction with the DnaJ-bound protein, DnaK hydrolyzes its bound ATP, resulting in the formation of a stable complex. GrpE releases ADP from DnaK; ATP binding to DnaK triggers the release of the substrate protein, thus completing the reaction cycle. Several rounds of ATP-dependent interactions between DnaJ, DnaK and GrpE are required for fully efficient folding. Also involved, together with DnaK and GrpE, in the DNA replication of plasmids through activation of initiation proteins. The sequence is that of Chaperone protein DnaJ from Haemophilus influenzae (strain PittGG).